Consider the following 380-residue polypeptide: mRNA cap guanine-N(7) methyltransferase (380 aa).

The 310-residue stretch at 24–333 (SRIFFMRNMN…MYLVFGFRKK (310 aa)) folds into the mRNA cap 0 methyltransferase domain. An mRNA-binding site is contributed by 33 to 34 (NN). The S-adenosyl-L-methionine site is built by Lys-37, Ala-62, Asp-84, Asp-117, Gln-139, and Tyr-144. Positions 336-380 (EAEKTEEEPATTKPVAESESEQKEVTESEEKEDQEDCEHQEAQTN) are disordered.

Belongs to the class I-like SAM-binding methyltransferase superfamily. mRNA cap 0 methyltransferase family.

The protein localises to the nucleus. It catalyses the reaction a 5'-end (5'-triphosphoguanosine)-ribonucleoside in mRNA + S-adenosyl-L-methionine = a 5'-end (N(7)-methyl 5'-triphosphoguanosine)-ribonucleoside in mRNA + S-adenosyl-L-homocysteine. In terms of biological role, mRNA-capping methyltransferase that methylates the N7 position of the added guanosine to the 5'-cap structure of mRNAs. Binds RNA containing 5'-terminal GpppC. The polypeptide is mRNA cap guanine-N(7) methyltransferase (tag-72) (Caenorhabditis elegans).